A 344-amino-acid polypeptide reads, in one-letter code: Aspartate-semialdehyde dehydrogenase (344 aa).

Residues 10 to 13 (TGQV) and 38 to 39 (RS) each bind NADP(+). Arginine 101 contributes to the phosphate binding site. Cysteine 131 serves as the catalytic Acyl-thioester intermediate. Glutamine 158 contacts substrate. 161–162 (SG) is an NADP(+) binding site. Phosphate is bound at residue lysine 228. Arginine 250 contacts substrate. Residue histidine 257 is the Proton acceptor of the active site. Asparagine 326 serves as a coordination point for NADP(+).

The protein belongs to the aspartate-semialdehyde dehydrogenase family. In terms of assembly, homodimer.

It catalyses the reaction L-aspartate 4-semialdehyde + phosphate + NADP(+) = 4-phospho-L-aspartate + NADPH + H(+). It participates in amino-acid biosynthesis; L-lysine biosynthesis via DAP pathway; (S)-tetrahydrodipicolinate from L-aspartate: step 2/4. Its pathway is amino-acid biosynthesis; L-methionine biosynthesis via de novo pathway; L-homoserine from L-aspartate: step 2/3. The protein operates within amino-acid biosynthesis; L-threonine biosynthesis; L-threonine from L-aspartate: step 2/5. Functionally, catalyzes the NADPH-dependent formation of L-aspartate-semialdehyde (L-ASA) by the reductive dephosphorylation of L-aspartyl-4-phosphate. The protein is Aspartate-semialdehyde dehydrogenase of Corynebacterium glutamicum (strain ATCC 13032 / DSM 20300 / JCM 1318 / BCRC 11384 / CCUG 27702 / LMG 3730 / NBRC 12168 / NCIMB 10025 / NRRL B-2784 / 534).